The sequence spans 143 residues: Transcriptional regulator MraZ (143 aa).

2 consecutive SpoVT-AbrB domains span residues 5–47 and 76–119; these read TYTP…PRAE and TDEQ…DAQA.

Belongs to the MraZ family. As to quaternary structure, forms oligomers.

The protein localises to the cytoplasm. It is found in the nucleoid. The polypeptide is Transcriptional regulator MraZ (Mycobacterium avium (strain 104)).